The chain runs to 314 residues: Ferrochelatase (314 aa).

Residues His-184 and Glu-259 each contribute to the Fe cation site.

Belongs to the ferrochelatase family.

It is found in the cytoplasm. The enzyme catalyses heme b + 2 H(+) = protoporphyrin IX + Fe(2+). It participates in porphyrin-containing compound metabolism; protoheme biosynthesis; protoheme from protoporphyrin-IX: step 1/1. Its function is as follows. Catalyzes the ferrous insertion into protoporphyrin IX. The chain is Ferrochelatase from Chlamydia trachomatis serovar L2 (strain ATCC VR-902B / DSM 19102 / 434/Bu).